The following is a 101-amino-acid chain: RNA-binding protein Hfq (101 aa).

The 60-residue stretch at 9-68 (DPFLNALRRERVPVSIYLVNGIKLQGQVESFDQFVILLKNTVSQMVYKHAISTVVPSRPV) folds into the Sm domain. A disordered region spans residues 63–101 (VPSRPVSHHSNNPSGSTNNYHGSNPSAPQQPQQDSDDAE). Polar residues predominate over residues 70–86 (HHSNNPSGSTNNYHGSN).

It belongs to the Hfq family. As to quaternary structure, homohexamer.

Its function is as follows. RNA chaperone that binds small regulatory RNA (sRNAs) and mRNAs to facilitate mRNA translational regulation in response to envelope stress, environmental stress and changes in metabolite concentrations. Also binds with high specificity to tRNAs. Positively regulates the expression of the yst gene for heat-stable enterotoxin (Y-ST). In Yersinia enterocolitica, this protein is RNA-binding protein Hfq.